We begin with the raw amino-acid sequence, 392 residues long: Tyrosine--tRNA ligase (392 aa).

The 'HIGH' region motif lies at 39–48; it reads PTAPDIHIGH. Residues 223–227 carry the 'KMSKS' region motif; it reads KMSKS. Residue K226 coordinates ATP. In terms of domain architecture, S4 RNA-binding spans 331 to 391; that stretch reads IGIAQLLKQA…GKRRFARVVL (61 aa).

The protein belongs to the class-I aminoacyl-tRNA synthetase family. TyrS type 2 subfamily. As to quaternary structure, homodimer.

The protein localises to the cytoplasm. The catalysed reaction is tRNA(Tyr) + L-tyrosine + ATP = L-tyrosyl-tRNA(Tyr) + AMP + diphosphate + H(+). Its function is as follows. Catalyzes the attachment of tyrosine to tRNA(Tyr) in a two-step reaction: tyrosine is first activated by ATP to form Tyr-AMP and then transferred to the acceptor end of tRNA(Tyr). This Ralstonia nicotianae (strain ATCC BAA-1114 / GMI1000) (Ralstonia solanacearum) protein is Tyrosine--tRNA ligase.